Reading from the N-terminus, the 141-residue chain is Acetyltransferase YPN_1354 (141 aa).

Residues 1-141 (MEIRIFQQDD…GKRLIVDQEY (141 aa)) enclose the N-acetyltransferase domain.

The protein belongs to the acetyltransferase family. YpeA subfamily.

This is Acetyltransferase YPN_1354 from Yersinia pestis bv. Antiqua (strain Nepal516).